The primary structure comprises 198 residues: Segregation and condensation protein B (198 aa).

Residues 168-198 (KLADPATDEPDQNEMDLFFDRFNQSKEQEEE) form a disordered region.

The protein belongs to the ScpB family. Homodimer. Homodimerization may be required to stabilize the binding of ScpA to the Smc head domains. Component of a cohesin-like complex composed of ScpA, ScpB and the Smc homodimer, in which ScpA and ScpB bind to the head domain of Smc. The presence of the three proteins is required for the association of the complex with DNA.

It localises to the cytoplasm. In terms of biological role, participates in chromosomal partition during cell division. May act via the formation of a condensin-like complex containing Smc and ScpA that pull DNA away from mid-cell into both cell halves. The sequence is that of Segregation and condensation protein B from Listeria monocytogenes serovar 1/2a (strain ATCC BAA-679 / EGD-e).